The primary structure comprises 93 residues: NAD(P)H-quinone oxidoreductase subunit 4L, chloroplastic (93 aa).

2 helical membrane passes run 1–21 (MLEH…SGLI) and 60–80 (IFAI…LSIA).

It belongs to the complex I subunit 4L family. In terms of assembly, NDH is composed of at least 16 different subunits, 5 of which are encoded in the nucleus.

The protein resides in the plastid. It localises to the chloroplast thylakoid membrane. It catalyses the reaction a plastoquinone + NADH + (n+1) H(+)(in) = a plastoquinol + NAD(+) + n H(+)(out). It carries out the reaction a plastoquinone + NADPH + (n+1) H(+)(in) = a plastoquinol + NADP(+) + n H(+)(out). NDH shuttles electrons from NAD(P)H:plastoquinone, via FMN and iron-sulfur (Fe-S) centers, to quinones in the photosynthetic chain and possibly in a chloroplast respiratory chain. The immediate electron acceptor for the enzyme in this species is believed to be plastoquinone. Couples the redox reaction to proton translocation, and thus conserves the redox energy in a proton gradient. The polypeptide is NAD(P)H-quinone oxidoreductase subunit 4L, chloroplastic (Anthoceros angustus (Hornwort)).